The sequence spans 840 residues: Wings apart-like protein 2 (840 aa).

3 disordered regions span residues 1–37 (MMER…EPVD), 56–78 (SDND…FGSN), and 532–594 (FDLE…DHHV). The segment covering 546 to 557 (KQKKSKGQKRKG) has biased composition (basic residues). Basic and acidic residues predominate over residues 558–567 (SYRDKKDERS). Residues 569–585 (QLFSSQEESNHGLNSQE) show a composition bias toward polar residues. A WAPL domain is found at 764 to 819 (KEAEKMIVEAYSALLLAFLSTESRSIRNAIRDYLPKRDMAILVPVLDRFVAFHTTL).

The protein belongs to the WAPL family. As to quaternary structure, interacts with the cohesin complex throughout the cell cycle. Expressed in roots, leaves, buds and siliques.

The protein resides in the nucleus. It localises to the chromosome. Functionally, regulator of sister chromatid cohesion in meiosis which negatively regulates cohesin association with chromatin, acting as an antagonist of CTF7. Cohesion ensures that chromosome partitioning is accurate in both meiotic and mitotic cells and plays an important role in DNA repair. Essential for the prophase removal of cohesin during meiosis thus determining the timely release of meiotic cohesion. Important for proper spindle attachment and assembly during meiosis. Helps to prevent abnormal centromere association during prophase I in meiocytes. Required for early embryonic patterning. Also involved in chromosome segregation during mitosis. The chain is Wings apart-like protein 2 from Arabidopsis thaliana (Mouse-ear cress).